A 175-amino-acid chain; its full sequence is Large ribosomal subunit protein uL6 (175 aa).

The protein belongs to the universal ribosomal protein uL6 family. Part of the 50S ribosomal subunit.

In terms of biological role, this protein binds to the 23S rRNA, and is important in its secondary structure. It is located near the subunit interface in the base of the L7/L12 stalk, and near the tRNA binding site of the peptidyltransferase center. The protein is Large ribosomal subunit protein uL6 of Xylella fastidiosa (strain M12).